The chain runs to 129 residues: Small ribosomal subunit protein uS11 (129 aa).

Belongs to the universal ribosomal protein uS11 family. In terms of assembly, part of the 30S ribosomal subunit. Interacts with proteins S7 and S18. Binds to IF-3.

Its function is as follows. Located on the platform of the 30S subunit, it bridges several disparate RNA helices of the 16S rRNA. Forms part of the Shine-Dalgarno cleft in the 70S ribosome. This chain is Small ribosomal subunit protein uS11, found in Methylocella silvestris (strain DSM 15510 / CIP 108128 / LMG 27833 / NCIMB 13906 / BL2).